The chain runs to 143 residues: MQEIEIFCDGSSLGNPGPGGYAAILRYKDKEKTISGGEEFTTNNRMELRALNEALKILKRPCRITLYSDSQYVCQAINVWLANWQKKNFSKVKNVDLWKEFLEVSKGHSIVAVWIKGHNGHAENERCDSLAKLEAQKRVKTTT.

Positions 1-136 constitute an RNase H type-1 domain; the sequence is MQEIEIFCDG…CDSLAKLEAQ (136 aa). Residues D9, E47, D69, and D128 each coordinate Mg(2+).

This sequence belongs to the RNase H family. As to quaternary structure, monomer. Mg(2+) is required as a cofactor.

It localises to the cytoplasm. It carries out the reaction Endonucleolytic cleavage to 5'-phosphomonoester.. In terms of biological role, endonuclease that specifically degrades the RNA of RNA-DNA hybrids. This is Ribonuclease HI (rnhA) from Helicobacter pylori (strain ATCC 700392 / 26695) (Campylobacter pylori).